The chain runs to 272 residues: ATP synthase subunit a (272 aa).

The next 5 membrane-spanning stretches (helical) occupy residues 41–61 (VLNIDSMFFSLLLGAIFLLIF), 101–121 (LIAPLALTIFVWVFLMNLMDL), 143–165 (VPSADVNITLSMALGVFILILYY), 221–241 (LIFILIAGLLPWWSQWILNVP), and 243–263 (AIFHILIITLQAFIFMVLTIV).

Belongs to the ATPase A chain family. As to quaternary structure, F-type ATPases have 2 components, CF(1) - the catalytic core - and CF(0) - the membrane proton channel. CF(1) has five subunits: alpha(3), beta(3), gamma(1), delta(1), epsilon(1). CF(0) has three main subunits: a(1), b(2) and c(9-12). The alpha and beta chains form an alternating ring which encloses part of the gamma chain. CF(1) is attached to CF(0) by a central stalk formed by the gamma and epsilon chains, while a peripheral stalk is formed by the delta and b chains.

It is found in the cell inner membrane. Key component of the proton channel; it plays a direct role in the translocation of protons across the membrane. The polypeptide is ATP synthase subunit a (Sodalis glossinidius (strain morsitans)).